The primary structure comprises 87 residues: U3-theraphotoxin-Hhn1m (87 aa).

A signal peptide spans 1–24 (MVNMKASMFLTFAGLVLLFVVCYA). A propeptide spanning residues 25–52 (SESEEKEFPKEMLSSIFAVDNDFKQEER) is cleaved from the precursor. Disulfide bonds link Cys-54–Cys-67, Cys-61–Cys-72, and Cys-66–Cys-79.

It belongs to the neurotoxin 10 (Hwtx-1) family. 51 (Hntx-8) subfamily. Hntx-8 sub-subfamily. Expressed by the venom gland.

The protein resides in the secreted. Its function is as follows. Ion channel inhibitor. The sequence is that of U3-theraphotoxin-Hhn1m from Cyriopagopus hainanus (Chinese bird spider).